The chain runs to 256 residues: Imidazole glycerol phosphate synthase subunit HisF (256 aa).

Active-site residues include D12 and D131.

This sequence belongs to the HisA/HisF family. As to quaternary structure, heterodimer of HisH and HisF.

The protein localises to the cytoplasm. It catalyses the reaction 5-[(5-phospho-1-deoxy-D-ribulos-1-ylimino)methylamino]-1-(5-phospho-beta-D-ribosyl)imidazole-4-carboxamide + L-glutamine = D-erythro-1-(imidazol-4-yl)glycerol 3-phosphate + 5-amino-1-(5-phospho-beta-D-ribosyl)imidazole-4-carboxamide + L-glutamate + H(+). It participates in amino-acid biosynthesis; L-histidine biosynthesis; L-histidine from 5-phospho-alpha-D-ribose 1-diphosphate: step 5/9. IGPS catalyzes the conversion of PRFAR and glutamine to IGP, AICAR and glutamate. The HisF subunit catalyzes the cyclization activity that produces IGP and AICAR from PRFAR using the ammonia provided by the HisH subunit. This Pseudomonas fluorescens (strain SBW25) protein is Imidazole glycerol phosphate synthase subunit HisF.